A 234-amino-acid chain; its full sequence is Leucyl/phenylalanyl-tRNA--protein transferase (234 aa).

The protein belongs to the L/F-transferase family.

The protein localises to the cytoplasm. The catalysed reaction is N-terminal L-lysyl-[protein] + L-leucyl-tRNA(Leu) = N-terminal L-leucyl-L-lysyl-[protein] + tRNA(Leu) + H(+). It catalyses the reaction N-terminal L-arginyl-[protein] + L-leucyl-tRNA(Leu) = N-terminal L-leucyl-L-arginyl-[protein] + tRNA(Leu) + H(+). It carries out the reaction L-phenylalanyl-tRNA(Phe) + an N-terminal L-alpha-aminoacyl-[protein] = an N-terminal L-phenylalanyl-L-alpha-aminoacyl-[protein] + tRNA(Phe). Functions in the N-end rule pathway of protein degradation where it conjugates Leu, Phe and, less efficiently, Met from aminoacyl-tRNAs to the N-termini of proteins containing an N-terminal arginine or lysine. This is Leucyl/phenylalanyl-tRNA--protein transferase from Escherichia fergusonii (strain ATCC 35469 / DSM 13698 / CCUG 18766 / IAM 14443 / JCM 21226 / LMG 7866 / NBRC 102419 / NCTC 12128 / CDC 0568-73).